A 189-amino-acid chain; its full sequence is Threonylcarbamoyl-AMP synthase (189 aa).

A YrdC-like domain is found at A9–R189.

This sequence belongs to the SUA5 family. TsaC subfamily.

It localises to the cytoplasm. It catalyses the reaction L-threonine + hydrogencarbonate + ATP = L-threonylcarbamoyladenylate + diphosphate + H2O. Required for the formation of a threonylcarbamoyl group on adenosine at position 37 (t(6)A37) in tRNAs that read codons beginning with adenine. Catalyzes the conversion of L-threonine, HCO(3)(-)/CO(2) and ATP to give threonylcarbamoyl-AMP (TC-AMP) as the acyladenylate intermediate, with the release of diphosphate. This Neisseria meningitidis serogroup C (strain 053442) protein is Threonylcarbamoyl-AMP synthase.